A 185-amino-acid chain; its full sequence is Thymidine kinase (185 aa).

ATP contacts are provided by residues 10-17 and 83-86; these read GPMYSGKT and DEVQ. Glutamate 84 functions as the Proton acceptor in the catalytic mechanism. The Zn(2+) site is built by cysteine 140, cysteine 143, cysteine 173, and cysteine 176.

This sequence belongs to the thymidine kinase family. Homotetramer.

It localises to the cytoplasm. It carries out the reaction thymidine + ATP = dTMP + ADP + H(+). This chain is Thymidine kinase, found in Pseudothermotoga lettingae (strain ATCC BAA-301 / DSM 14385 / NBRC 107922 / TMO) (Thermotoga lettingae).